The primary structure comprises 750 residues: ABC transporter D family member 3 (750 aa).

Residues 1–14 (MKKNNVNNITETLN) are compositionally biased toward polar residues. The segment at 1–32 (MKKNNVNNITETLNSSSSSSSSSGSSSDEEVK) is disordered. Residues 15–26 (SSSSSSSSSGSS) are compositionally biased toward low complexity. 4 consecutive transmembrane segments (helical) span residues 63–83 (IVII…LLFG), 123–143 (FAIG…SIMA), 188–208 (FTTL…VVVY), and 215–235 (TTID…GYFI). One can recognise an ABC transmembrane type-1 domain in the interval 74–362 (PLLLFLLLFG…EQAKQQFEAL (289 aa)). A coiled-coil region spans residues 334–370 (ALLKRSNKNIKNEELLVEEEQAKQQFEALLKNKKRVI). The chain crosses the membrane as a helical span at residues 382–402 (MFTFFSPLINYFIISIPVFFL). The ABC transporter domain maps to 507–737 (ITLDDVTYFT…SNNINTINID (231 aa)). An ATP-binding site is contributed by 540–547 (GPSGSGKS).

The protein belongs to the ABC transporter superfamily. ABCD family. Peroxisomal fatty acyl CoA transporter (TC 3.A.1.203) subfamily.

The protein resides in the membrane. This Dictyostelium discoideum (Social amoeba) protein is ABC transporter D family member 3 (abcD3).